Consider the following 1242-residue polypeptide: DNA polymerase catalytic subunit (1242 aa).

4 disordered regions span residues 14–38 (GAVA…RPPQ), 644–665 (LQSA…SSSS), 877–898 (EGDS…GGSN), and 1108–1163 (TAPQ…KPPS). Low complexity predominate over residues 653-665 (GVSPGSGSNSSSS). Positions 1110 to 1119 (PQGSSDNGDS) are enriched in polar residues. Basic and acidic residues predominate over residues 1145–1155 (ESNRRGGEPAK).

Belongs to the DNA polymerase type-B family. In terms of assembly, forms a complex with the ssDNA-binding protein UL57, the DNA polymerase processivity factor UL44, and the alkaline exonuclease UL98. Interacts with the putative helicase-primase complex composed of UL70, UL102 and UL105 proteins; these interactions may coordinate leading and lagging strand DNA synthesis at the replication fork.

The protein resides in the host nucleus. The enzyme catalyses DNA(n) + a 2'-deoxyribonucleoside 5'-triphosphate = DNA(n+1) + diphosphate. Its function is as follows. Replicates viral genomic DNA in the late phase of lytic infection, producing long concatemeric DNA. The replication complex is composed of six viral proteins: the DNA polymerase, processivity factor, primase, primase-associated factor, helicase, and ssDNA-binding protein. The sequence is that of DNA polymerase catalytic subunit (UL54) from Homo sapiens (Human).